Here is a 731-residue protein sequence, read N- to C-terminus: Catalase-peroxidase (731 aa).

Positions 98–226 form a cross-link, tryptophyl-tyrosyl-methioninium (Trp-Tyr) (with M-252); sequence WHAAGTYRTA…LAAVQMGLIY (129 aa). The Proton acceptor role is filled by histidine 99. A cross-link (tryptophyl-tyrosyl-methioninium (Tyr-Met) (with W-98)) is located at residues 226–252; sequence YVNPEGPDGNPDIVASGHDVIETFGRM. Histidine 267 lines the heme b pocket.

Belongs to the peroxidase family. Peroxidase/catalase subfamily. In terms of assembly, homodimer or homotetramer. The cofactor is heme b. Post-translationally, formation of the three residue Trp-Tyr-Met cross-link is important for the catalase, but not the peroxidase activity of the enzyme.

It catalyses the reaction H2O2 + AH2 = A + 2 H2O. The enzyme catalyses 2 H2O2 = O2 + 2 H2O. In terms of biological role, bifunctional enzyme with both catalase and broad-spectrum peroxidase activity. The sequence is that of Catalase-peroxidase from Ruegeria pomeroyi (strain ATCC 700808 / DSM 15171 / DSS-3) (Silicibacter pomeroyi).